We begin with the raw amino-acid sequence, 566 residues long: KsdD-like steroid dehydrogenase MT0809 (566 aa).

23 to 54 (DAIVVGAGLAGLVAACELADRGLRVLILDQEN) provides a ligand contact to FAD.

Belongs to the FAD-dependent oxidoreductase 2 family. FAD serves as cofactor.

It participates in lipid metabolism; steroid biosynthesis. Functionally, able to catalyze the elimination of the C-1 and C-2 hydrogen atoms of the A-ring from the polycyclic ring structure of 3-ketosteroids. In Mycobacterium tuberculosis (strain CDC 1551 / Oshkosh), this protein is KsdD-like steroid dehydrogenase MT0809.